The sequence spans 268 residues: Tryptophan synthase alpha chain (268 aa).

Active-site proton acceptor residues include Glu-49 and Asp-60.

This sequence belongs to the TrpA family. In terms of assembly, tetramer of two alpha and two beta chains.

It carries out the reaction (1S,2R)-1-C-(indol-3-yl)glycerol 3-phosphate + L-serine = D-glyceraldehyde 3-phosphate + L-tryptophan + H2O. Its pathway is amino-acid biosynthesis; L-tryptophan biosynthesis; L-tryptophan from chorismate: step 5/5. The alpha subunit is responsible for the aldol cleavage of indoleglycerol phosphate to indole and glyceraldehyde 3-phosphate. The protein is Tryptophan synthase alpha chain of Haemophilus influenzae (strain ATCC 51907 / DSM 11121 / KW20 / Rd).